The following is a 291-amino-acid chain: Signal peptidase I (291 aa).

Residues 1–45 (MTMKKLTSTTTTLWDNKLFINNLKNFMQTNTESNNNKTTAQEWKS) are Cytoplasmic-facing. Residues 46-66 (FILVVVIALMIRILIIESFVV) form a helical membrane-spanning segment. The Periplasmic segment spans residues 67–291 (PTGSMKATIL…IFRNLYSIED (225 aa)). Active-site residues include serine 70 and lysine 133.

This sequence belongs to the peptidase S26 family.

The protein localises to the cell inner membrane. It carries out the reaction Cleavage of hydrophobic, N-terminal signal or leader sequences from secreted and periplasmic proteins.. This chain is Signal peptidase I (lepB), found in Rickettsia bellii (strain RML369-C).